A 279-amino-acid polypeptide reads, in one-letter code: Thymidylate synthase (279 aa).

A dUMP-binding site is contributed by 133-134 (RR). Catalysis depends on C154, which acts as the Nucleophile. DUMP is bound by residues 178–181 (RSND), N189, and 219–221 (HIY). D181 contacts (6R)-5,10-methylene-5,6,7,8-tetrahydrofolate. A278 lines the (6R)-5,10-methylene-5,6,7,8-tetrahydrofolate pocket.

It belongs to the thymidylate synthase family. Bacterial-type ThyA subfamily. In terms of assembly, homodimer.

The protein resides in the cytoplasm. The enzyme catalyses dUMP + (6R)-5,10-methylene-5,6,7,8-tetrahydrofolate = 7,8-dihydrofolate + dTMP. It participates in pyrimidine metabolism; dTTP biosynthesis. Functionally, catalyzes the reductive methylation of 2'-deoxyuridine-5'-monophosphate (dUMP) to 2'-deoxythymidine-5'-monophosphate (dTMP) while utilizing 5,10-methylenetetrahydrofolate (mTHF) as the methyl donor and reductant in the reaction, yielding dihydrofolate (DHF) as a by-product. This enzymatic reaction provides an intracellular de novo source of dTMP, an essential precursor for DNA biosynthesis. This Streptococcus sanguinis (strain SK36) protein is Thymidylate synthase.